The sequence spans 572 residues: Proline--tRNA ligase (572 aa).

The protein belongs to the class-II aminoacyl-tRNA synthetase family. ProS type 1 subfamily. As to quaternary structure, homodimer.

Its subcellular location is the cytoplasm. It carries out the reaction tRNA(Pro) + L-proline + ATP = L-prolyl-tRNA(Pro) + AMP + diphosphate. In terms of biological role, catalyzes the attachment of proline to tRNA(Pro) in a two-step reaction: proline is first activated by ATP to form Pro-AMP and then transferred to the acceptor end of tRNA(Pro). As ProRS can inadvertently accommodate and process non-cognate amino acids such as alanine and cysteine, to avoid such errors it has two additional distinct editing activities against alanine. One activity is designated as 'pretransfer' editing and involves the tRNA(Pro)-independent hydrolysis of activated Ala-AMP. The other activity is designated 'posttransfer' editing and involves deacylation of mischarged Ala-tRNA(Pro). The misacylated Cys-tRNA(Pro) is not edited by ProRS. The chain is Proline--tRNA ligase from Enterococcus faecalis (strain ATCC 700802 / V583).